The primary structure comprises 321 residues: tRNA uridine(34) hydroxylase (321 aa).

Positions 135–233 (DDPLTLVIDT…YLEEVPENES (99 aa)) constitute a Rhodanese domain. The active-site Cysteine persulfide intermediate is the Cys-193.

Belongs to the TrhO family.

The catalysed reaction is uridine(34) in tRNA + AH2 + O2 = 5-hydroxyuridine(34) in tRNA + A + H2O. Functionally, catalyzes oxygen-dependent 5-hydroxyuridine (ho5U) modification at position 34 in tRNAs. This Prochlorococcus marinus (strain SARG / CCMP1375 / SS120) protein is tRNA uridine(34) hydroxylase.